A 449-amino-acid chain; its full sequence is Phosphoglucosamine mutase (449 aa).

Residue Ser101 is the Phosphoserine intermediate of the active site. Residues Ser101, Asp240, Asp242, and Asp244 each contribute to the Mg(2+) site. At Ser101 the chain carries Phosphoserine.

It belongs to the phosphohexose mutase family. Mg(2+) is required as a cofactor. In terms of processing, activated by phosphorylation.

The catalysed reaction is alpha-D-glucosamine 1-phosphate = D-glucosamine 6-phosphate. Functionally, catalyzes the conversion of glucosamine-6-phosphate to glucosamine-1-phosphate. The sequence is that of Phosphoglucosamine mutase from Streptococcus suis (strain 98HAH33).